Here is a 359-residue protein sequence, read N- to C-terminus: 3-dehydroquinate synthase (359 aa).

NAD(+) contacts are provided by residues 71 to 76 (DGEQYK), 105 to 109 (GVIGD), 129 to 130 (TT), lysine 142, lysine 151, and 169 to 172 (CLST). Zn(2+) is bound by residues glutamate 184, histidine 247, and histidine 264.

Belongs to the sugar phosphate cyclases superfamily. Dehydroquinate synthase family. Co(2+) serves as cofactor. It depends on Zn(2+) as a cofactor. NAD(+) is required as a cofactor.

It localises to the cytoplasm. The enzyme catalyses 7-phospho-2-dehydro-3-deoxy-D-arabino-heptonate = 3-dehydroquinate + phosphate. It functions in the pathway metabolic intermediate biosynthesis; chorismate biosynthesis; chorismate from D-erythrose 4-phosphate and phosphoenolpyruvate: step 2/7. In terms of biological role, catalyzes the conversion of 3-deoxy-D-arabino-heptulosonate 7-phosphate (DAHP) to dehydroquinate (DHQ). This Shewanella pealeana (strain ATCC 700345 / ANG-SQ1) protein is 3-dehydroquinate synthase.